The chain runs to 517 residues: Diacylglycerol O-acyltransferase 1C (517 aa).

Residues 1-82 (MAISDVPAAA…NVGAAANDAG (82 aa)) are disordered. A compositionally biased stretch (low complexity) spans 8–17 (AAAGTTATTT). Basic and acidic residues predominate over residues 53–64 (ITDDDNIKDHKP). Low complexity predominate over residues 71–81 (DDNVGAAANDA). 7 helical membrane passes run 121 to 141 (HAGLFNLCIVVLVAVNSRLII), 165 to 185 (WPLFMCCLSLAIFPLAAFVVE), 197 to 217 (VVVLLHLIISTVELCYPVLVI), 222 to 242 (SAFVSGVTLMLLTCIVWLKLV), 272 to 292 (YPYTVTFRSLAYFMVAPTLCY), 305 to 325 (GWVFRQLVKLIIFTGVMGFII), and 361 to 381 (VWLCMFYCFFHLWLNILAELV). An FYXDWWN motif motif is present at residues 388 to 394 (FYKDWWN). The next 3 membrane-spanning stretches (helical) occupy residues 429-449 (GAASLIAFLVSAVFHELCIAV), 451-471 (CHMFKLWAFIGIMFQVPLVLI), and 484-504 (VGNMIFWFIFCILGQPMSVLL). The active site involves histidine 443.

It belongs to the membrane-bound acyltransferase family. Sterol o-acyltransferase subfamily.

Its subcellular location is the endoplasmic reticulum membrane. The catalysed reaction is an acyl-CoA + a 1,2-diacyl-sn-glycerol = a triacyl-sn-glycerol + CoA. Its pathway is glycerolipid metabolism; triacylglycerol biosynthesis. In terms of biological role, involved in triacylglycerol (TAG) synthesis. Catalyzes the acylation of the sn-3 hydroxy group of sn-1,2-diacylglycerol using acyl-CoA. In Glycine max (Soybean), this protein is Diacylglycerol O-acyltransferase 1C.